Consider the following 213-residue polypeptide: Maleylacetoacetate isomerase (213 aa).

The GST N-terminal domain occupies 3 to 84; it reads NETVLYDYWR…YLAETRDGTG (82 aa). The region spanning 89–213 is the GST C-terminal domain; it reads HPIDRQRVRA…QRAHPDRAKP (125 aa).

Belongs to the GST superfamily. Zeta family.

The enzyme catalyses 4-maleylacetoacetate = 4-fumarylacetoacetate. The protein operates within amino-acid degradation; L-phenylalanine degradation; acetoacetate and fumarate from L-phenylalanine: step 5/6. The chain is Maleylacetoacetate isomerase (maiA) from Rhizobium meliloti (strain 1021) (Ensifer meliloti).